Here is a 717-residue protein sequence, read N- to C-terminus: Inhibitor of nuclear factor kappa-B kinase subunit epsilon (717 aa).

A Protein kinase domain is found at 9-315 (WHTDDLLGQG…LQRTVIHVFS (307 aa)). 15 to 23 (LGQGATASV) is an ATP binding site. K30 is covalently cross-linked (Glycyl lysine isopeptide (Lys-Gly) (interchain with G-Cter in ubiquitin)). K38 contacts ATP. The Proton acceptor role is filled by D135. S172 carries the phosphoserine; by autocatalysis and IKKB modification. Residue K231 forms a Glycyl lysine isopeptide (Lys-Gly) (interchain with G-Cter in SUMO1) linkage. An interaction with DDX3X region spans residues 385–650 (SSDTPKGLAF…AQESLNKIFD (266 aa)). K403 is covalently cross-linked (Glycyl lysine isopeptide (Lys-Gly) (interchain with G-Cter in ubiquitin)). The leucine-zipper stretch occupies residues 452-473 (LQDTCQQTLEVTRTALLYLSSS). Position 503 is a phosphothreonine (T503). S665 carries the post-translational modification Phosphoserine.

Belongs to the protein kinase superfamily. Ser/Thr protein kinase family. I-kappa-B kinase subfamily. As to quaternary structure, homodimer. Interacts with MAVS/IPS1. Interacts (via protein kinase domain) with TTLL12 (via N-terminus); the interaction prevents MAVS binding to IKBKE. Interacts with the adapter proteins AZI2/NAP1, TANK and TBKBP1/SINTBAD. Interacts with SIKE1. Interacts with TICAM1/TRIF, IRF3 and RIGI; interactions are disrupted by the interaction between IKBKE and SIKE1. Interacts with TOPORS; induced by DNA damage. Interacts with CYLD, IKBKB, IKBKG and MYD88. Interacts with IFIH1. Interacts with DDX3X; the interaction may be induced upon virus infection. Interacts with TRIM6 (via SPRY box). Interacts with unanchored K48-linked polyubiquitin chains; this leads to IKBKE activation. Interacts with TBK1. Interacts with FKBP5. Post-translationally, sumoylation by TOPORS upon DNA damage is required for protection of cells against DNA damage-induced cell death. Desumoylated by SENP1. Autophosphorylated and phosphorylated by IKBKB/IKKB. Phosphorylation at Ser-172 is enhanced by the interaction with DDX3X. Phosphorylated at Thr-503 upon IFN activation. In terms of processing, 'Lys-63'-linked polyubiquitinated at Lys-30 and Lys-403 by TRAF2:BIRC2 and TRAF2:BIRC3 complexes. Ubiquitination is induced by LPS, TNFA and interleukin-1 and required for full kinase activity and KF-kappa-B pathway activation. In terms of tissue distribution, expressed in bone marrow-derived macrophages and at low levels in liver and white adipose tissue (at protein level). Detected in muscle and lung.

It localises to the cytoplasm. Its subcellular location is the nucleus. It is found in the PML body. It catalyses the reaction L-seryl-[I-kappa-B protein] + ATP = O-phospho-L-seryl-[I-kappa-B protein] + ADP + H(+). Its activity is regulated as follows. Kinase activity is inhibited competitively by amlexanox. In terms of biological role, serine/threonine kinase that plays an essential role in regulating inflammatory responses to viral infection, through the activation of the type I IFN, NF-kappa-B and STAT signaling. Also involved in TNFA and inflammatory cytokines, like Interleukin-1, signaling. Following activation of viral RNA sensors, such as RIG-I-like receptors, associates with DDX3X and phosphorylates interferon regulatory factors (IRFs), IRF3 and IRF7, as well as DDX3X. This activity allows subsequent homodimerization and nuclear translocation of the IRF3 leading to transcriptional activation of pro-inflammatory and antiviral genes including IFNB. In order to establish such an antiviral state, IKBKE forms several different complexes whose composition depends on the type of cell and cellular stimuli. Thus, several scaffolding molecules including IPS1/MAVS, TANK, AZI2/NAP1 or TBKBP1/SINTBAD can be recruited to the IKBKE-containing-complexes. Activated by polyubiquitination in response to TNFA and interleukin-1, regulates the NF-kappa-B signaling pathway through, at least, the phosphorylation of CYLD. Phosphorylates inhibitors of NF-kappa-B thus leading to the dissociation of the inhibitor/NF-kappa-B complex and ultimately the degradation of the inhibitor. In addition, is also required for the induction of a subset of ISGs which displays antiviral activity, may be through the phosphorylation of STAT1 at 'Ser-708'. Phosphorylation of STAT1 at 'Ser-708' also seems to promote the assembly and DNA binding of ISGF3 (STAT1:STAT2:IRF9) complexes compared to GAF (STAT1:STAT1) complexes, in this way regulating the balance between type I and type II IFN responses. Protects cells against DNA damage-induced cell death. Also plays an important role in energy balance regulation by sustaining a state of chronic, low-grade inflammation in obesity, wich leads to a negative impact on insulin sensitivity. Phosphorylates AKT1. This Mus musculus (Mouse) protein is Inhibitor of nuclear factor kappa-B kinase subunit epsilon (Ikbke).